We begin with the raw amino-acid sequence, 389 residues long: Na(+)/H(+) antiporter NhaA 1 (389 aa).

The next 11 membrane-spanning stretches (helical) occupy residues 14–34 (AGGILLVIAAAIAMVIANSPL), 47–67 (FGMSVSHWINDGLMAIFFLLI), 87–107 (IFPAIAAVGGMLAPALIYVAF), 117–137 (GWAIPAATDIAFALGIMALLG), 146–166 (VFLLALAIIDDLGVVVIIALF), 171–191 (LSTLALTVGFAMTGVLFMLNA), 197–217 (LIWYIVVGFILWVAVLKSGVH), 252–272 (VAFAILPVFAFANAGISLEGV), 280–300 (MLPLGIALGLLVGKPLGIFTF), 321–341 (IFAVSVLCGIGFTMSIFISSL), and 356–376 (LGILMGSTTAAVLGYFLLHVS).

It belongs to the NhaA Na(+)/H(+) (TC 2.A.33) antiporter family.

It is found in the cell inner membrane. The catalysed reaction is Na(+)(in) + 2 H(+)(out) = Na(+)(out) + 2 H(+)(in). Functionally, na(+)/H(+) antiporter that extrudes sodium in exchange for external protons. In Vibrio vulnificus (strain CMCP6), this protein is Na(+)/H(+) antiporter NhaA 1.